A 373-amino-acid polypeptide reads, in one-letter code: Potential protein lysine methyltransferase SET6 (373 aa).

One can recognise an SET domain in the interval 12 to 338; the sequence is PFFQVRQTKW…KDEQICIDYS (327 aa).

The protein belongs to the class V-like SAM-binding methyltransferase superfamily.

Involved in resistance to compounds that target ergosterol biosynthesis, including fenpropimorph, dyclonine, and alverine citrate. Since a deletion in the absence of these compounds does not have an effect on growth, is more likely to be involved in compound availability. This is Potential protein lysine methyltransferase SET6 (SET6) from Saccharomyces cerevisiae (strain ATCC 204508 / S288c) (Baker's yeast).